A 365-amino-acid chain; its full sequence is Anhydro-N-acetylmuramic acid kinase (365 aa).

9–16 (GTSLDGVD) provides a ligand contact to ATP.

The protein belongs to the anhydro-N-acetylmuramic acid kinase family.

It catalyses the reaction 1,6-anhydro-N-acetyl-beta-muramate + ATP + H2O = N-acetyl-D-muramate 6-phosphate + ADP + H(+). The protein operates within amino-sugar metabolism; 1,6-anhydro-N-acetylmuramate degradation. It participates in cell wall biogenesis; peptidoglycan recycling. Its function is as follows. Catalyzes the specific phosphorylation of 1,6-anhydro-N-acetylmuramic acid (anhMurNAc) with the simultaneous cleavage of the 1,6-anhydro ring, generating MurNAc-6-P. Is required for the utilization of anhMurNAc either imported from the medium or derived from its own cell wall murein, and thus plays a role in cell wall recycling. In Rhodopseudomonas palustris (strain BisB18), this protein is Anhydro-N-acetylmuramic acid kinase.